Reading from the N-terminus, the 104-residue chain is Large ribosomal subunit protein uL24 (104 aa).

This sequence belongs to the universal ribosomal protein uL24 family. Part of the 50S ribosomal subunit.

In terms of biological role, one of two assembly initiator proteins, it binds directly to the 5'-end of the 23S rRNA, where it nucleates assembly of the 50S subunit. One of the proteins that surrounds the polypeptide exit tunnel on the outside of the subunit. This chain is Large ribosomal subunit protein uL24, found in Sodalis glossinidius (strain morsitans).